Reading from the N-terminus, the 366-residue chain is Aminomethyltransferase (366 aa).

The protein belongs to the GcvT family. The glycine cleavage system is composed of four proteins: P, T, L and H.

The enzyme catalyses N(6)-[(R)-S(8)-aminomethyldihydrolipoyl]-L-lysyl-[protein] + (6S)-5,6,7,8-tetrahydrofolate = N(6)-[(R)-dihydrolipoyl]-L-lysyl-[protein] + (6R)-5,10-methylene-5,6,7,8-tetrahydrofolate + NH4(+). In terms of biological role, the glycine cleavage system catalyzes the degradation of glycine. This chain is Aminomethyltransferase, found in Chlorobium chlorochromatii (strain CaD3).